A 313-amino-acid chain; its full sequence is tRNA uridine(34) hydroxylase (313 aa).

Residues 127 to 225 (SDPDTILIDT…YLETVPEEES (99 aa)) enclose the Rhodanese domain. Catalysis depends on cysteine 185, which acts as the Cysteine persulfide intermediate.

The protein belongs to the TrhO family.

It catalyses the reaction uridine(34) in tRNA + AH2 + O2 = 5-hydroxyuridine(34) in tRNA + A + H2O. Functionally, catalyzes oxygen-dependent 5-hydroxyuridine (ho5U) modification at position 34 in tRNAs. This chain is tRNA uridine(34) hydroxylase, found in Gluconobacter oxydans (strain 621H) (Gluconobacter suboxydans).